The primary structure comprises 370 residues: Putative agmatine deiminase (370 aa).

Cysteine 361 (amidino-cysteine intermediate) is an active-site residue.

Belongs to the agmatine deiminase family.

The catalysed reaction is agmatine + H2O = N-carbamoylputrescine + NH4(+). This is Putative agmatine deiminase from Shewanella sp. (strain MR-4).